The sequence spans 211 residues: Imidazole glycerol phosphate synthase subunit HisH (211 aa).

The Glutamine amidotransferase type-1 domain maps to 5–211 (SVALLDYGSG…QLLRNWVDSL (207 aa)). The active-site Nucleophile is Cys83. Residues His192 and Glu194 contribute to the active site.

In terms of assembly, heterodimer of HisH and HisF.

It localises to the cytoplasm. The enzyme catalyses 5-[(5-phospho-1-deoxy-D-ribulos-1-ylimino)methylamino]-1-(5-phospho-beta-D-ribosyl)imidazole-4-carboxamide + L-glutamine = D-erythro-1-(imidazol-4-yl)glycerol 3-phosphate + 5-amino-1-(5-phospho-beta-D-ribosyl)imidazole-4-carboxamide + L-glutamate + H(+). It catalyses the reaction L-glutamine + H2O = L-glutamate + NH4(+). It participates in amino-acid biosynthesis; L-histidine biosynthesis; L-histidine from 5-phospho-alpha-D-ribose 1-diphosphate: step 5/9. Functionally, IGPS catalyzes the conversion of PRFAR and glutamine to IGP, AICAR and glutamate. The HisH subunit catalyzes the hydrolysis of glutamine to glutamate and ammonia as part of the synthesis of IGP and AICAR. The resulting ammonia molecule is channeled to the active site of HisF. This Nocardia farcinica (strain IFM 10152) protein is Imidazole glycerol phosphate synthase subunit HisH.